The chain runs to 278 residues: MKTKTDFLKMKEQGEPITMLTAYDYPSAKLAEEAEVDMILVGDSLGMVVLGYDSTVPVTVEDMIHHTKAVRRGAKETFIVTDMPFMSYHVSPQDTMVNARRIVQESGAHALKVEGAGEVISTIHYLTSAGIPVVAHLGLTPQSVGVLGGYKVQGKDAESAKKLIEDAKRCEEAGAIALVLECVPMQLAKFISKQLTIPTIGIGAGQKVDGQVLVYHDLISYGVNRVPKFVKQYTSVQEEIVRGISQYVTEVKTGQFPEEKHSFTMKEEECLALYGGKQ.

Residues D43 and D82 each contribute to the Mg(2+) site. Residues D43–S44, D82, and K112 each bind 3-methyl-2-oxobutanoate. E114 contributes to the Mg(2+) binding site. The Proton acceptor role is filled by E181.

Belongs to the PanB family. Homodecamer; pentamer of dimers. Mg(2+) is required as a cofactor.

The protein localises to the cytoplasm. The enzyme catalyses 3-methyl-2-oxobutanoate + (6R)-5,10-methylene-5,6,7,8-tetrahydrofolate + H2O = 2-dehydropantoate + (6S)-5,6,7,8-tetrahydrofolate. The protein operates within cofactor biosynthesis; (R)-pantothenate biosynthesis; (R)-pantoate from 3-methyl-2-oxobutanoate: step 1/2. Functionally, catalyzes the reversible reaction in which hydroxymethyl group from 5,10-methylenetetrahydrofolate is transferred onto alpha-ketoisovalerate to form ketopantoate. This Bacillus cereus (strain AH187) protein is 3-methyl-2-oxobutanoate hydroxymethyltransferase.